We begin with the raw amino-acid sequence, 323 residues long: DNA primase small subunit PriS (323 aa).

Residues Asp97, Asp99, and Asp274 contribute to the active site.

It belongs to the eukaryotic-type primase small subunit family. As to quaternary structure, heterodimer of a small subunit (PriS) and a large subunit (PriL). Mg(2+) is required as a cofactor. It depends on Mn(2+) as a cofactor.

Catalytic subunit of DNA primase, an RNA polymerase that catalyzes the synthesis of short RNA molecules used as primers for DNA polymerase during DNA replication. The small subunit contains the primase catalytic core and has DNA synthesis activity on its own. Binding to the large subunit stabilizes and modulates the activity, increasing the rate of DNA synthesis while decreasing the length of the DNA fragments, and conferring RNA synthesis capability. The DNA polymerase activity may enable DNA primase to also catalyze primer extension after primer synthesis. May also play a role in DNA repair. The chain is DNA primase small subunit PriS from Methanothermobacter thermautotrophicus (strain ATCC 29096 / DSM 1053 / JCM 10044 / NBRC 100330 / Delta H) (Methanobacterium thermoautotrophicum).